Consider the following 490-residue polypeptide: Pentatricopeptide repeat-containing protein At2g20710, mitochondrial (490 aa).

A mitochondrion-targeting transit peptide spans 1–86 (MKHLLLLRLV…IKMLRKFSRF (86 aa)). PPR repeat units follow at residues 138-172 (NYHL…GFLK), 173-207 (GCLP…TVKP), 208-243 (DIFT…GLHL), 244-274 (DWRT…SEQM), 280-310 (RKHA…YKEL), 314-344 (YNTG…WEAG), 349-379 (DIRI…LVQK), and 384-421 (DTST…GWRP).

It belongs to the PPR family. P subfamily.

It localises to the mitochondrion. The sequence is that of Pentatricopeptide repeat-containing protein At2g20710, mitochondrial from Arabidopsis thaliana (Mouse-ear cress).